Reading from the N-terminus, the 162-residue chain is Large ribosomal subunit protein uL15 (162 aa).

Residues 1-10 (MNLNELRDNA) show a composition bias toward basic and acidic residues. Residues 1–39 (MNLNELRDNAGSRYRKKRLGRGIGSGKGKTSGKGVKGQK) form a disordered region. Residues 21-35 (RGIGSGKGKTSGKGV) are compositionally biased toward gly residues.

This sequence belongs to the universal ribosomal protein uL15 family. As to quaternary structure, part of the 50S ribosomal subunit.

Binds to the 23S rRNA. This chain is Large ribosomal subunit protein uL15, found in Gluconacetobacter diazotrophicus (strain ATCC 49037 / DSM 5601 / CCUG 37298 / CIP 103539 / LMG 7603 / PAl5).